A 202-amino-acid polypeptide reads, in one-letter code: Odorant-binding protein 59a (202 aa).

Positions 1–20 (MKQLIFLLICLSCGTCSIYA) are cleaved as a signal peptide. Basic and acidic residues predominate over residues 43–53 (HRQDEDEDRGR). The interval 43-105 (HRQDEDEDRG…QSDGRNHTSN (63 aa)) is disordered. Gly residues predominate over residues 54–65 (GGQGRQGNGYEY).

Belongs to the PBP/GOBP family. Expressed in non-neuronal cells in hygrosensitive sensilla in the second chamber of the sacculus of the antenna third segment (at protein level).

The protein localises to the secreted. Its function is as follows. Odorant-binding protein required for hygrotaxis behavior in humidity-detecting sensilla. This is Odorant-binding protein 59a from Drosophila melanogaster (Fruit fly).